A 280-amino-acid chain; its full sequence is 4-diphosphocytidyl-2-C-methyl-D-erythritol kinase (280 aa).

Lysine 8 is an active-site residue. 91 to 101 (PVAAGLAGGST) serves as a coordination point for ATP. Residue aspartate 133 is part of the active site.

It belongs to the GHMP kinase family. IspE subfamily.

The enzyme catalyses 4-CDP-2-C-methyl-D-erythritol + ATP = 4-CDP-2-C-methyl-D-erythritol 2-phosphate + ADP + H(+). It participates in isoprenoid biosynthesis; isopentenyl diphosphate biosynthesis via DXP pathway; isopentenyl diphosphate from 1-deoxy-D-xylulose 5-phosphate: step 3/6. Functionally, catalyzes the phosphorylation of the position 2 hydroxy group of 4-diphosphocytidyl-2C-methyl-D-erythritol. The protein is 4-diphosphocytidyl-2-C-methyl-D-erythritol kinase of Clostridium botulinum (strain ATCC 19397 / Type A).